We begin with the raw amino-acid sequence, 274 residues long: MQFAKMHGLGNDFMVVDAVTQNVYFSPELIRRLADRHCGVGFDQLLVVEPPYDPELDFHYRIFNADGSEVAQCGNGARCFARFVRLKGLTNKRDIAVSTQTGRMVLSVTDDELVRVNMGEPNFEPQQVPFRAVKAEKTYIMRADEHTVLCGVVSMGNPHCVIQVEDVDTAKVETLGPLLESHERFPERANIGFMQVVDSHTVRLRVYERGAGETQACGSGACAAVAVGIQQGLLSANVRVSLPGGDLDIQWDGPGHPLFMTGPATHVYDGFIHL.

Substrate is bound by residues asparagine 11, glutamine 44, and asparagine 64. Catalysis depends on cysteine 73, which acts as the Proton donor. Residues 74 to 75 (GN), asparagine 157, asparagine 190, and 208 to 209 (ER) each bind substrate. The active-site Proton acceptor is cysteine 217. 218-219 (GS) serves as a coordination point for substrate.

The protein belongs to the diaminopimelate epimerase family. As to quaternary structure, homodimer.

It localises to the cytoplasm. The catalysed reaction is (2S,6S)-2,6-diaminopimelate = meso-2,6-diaminopimelate. Its pathway is amino-acid biosynthesis; L-lysine biosynthesis via DAP pathway; DL-2,6-diaminopimelate from LL-2,6-diaminopimelate: step 1/1. Functionally, catalyzes the stereoinversion of LL-2,6-diaminopimelate (L,L-DAP) to meso-diaminopimelate (meso-DAP), a precursor of L-lysine and an essential component of the bacterial peptidoglycan. The polypeptide is Diaminopimelate epimerase (Pectobacterium carotovorum subsp. carotovorum (strain PC1)).